The chain runs to 874 residues: Pyruvate, phosphate dikinase (874 aa).

The N-terminal stretch occupies residues 2-340 (AKWVYKFEEG…LYFLQTRNGK (339 aa)). Arginine 92 contacts ATP. The linker 1 stretch occupies residues 340 to 399 (KRTAPAALQIACDLVDEGMITEEEAVVRIEAKSLDQLLHPTFNPAALKAGEVIGSALPAS). The central stretch occupies residues 400–498 (PGAAAGKVYF…TFAEGDYISL (99 aa)). Threonine 453 bears the Phosphothreonine; by PDRP1 mark. Histidine 455 serves as the catalytic Tele-phosphohistidine intermediate. A linker 2 region spans residues 499 to 533 (DGSTGKIYKGDIETQEASVSGSFERIMVWADKFRT). A C-terminal region spans residues 534 to 874 (LKVRTNADTP…AAAQAALNNK (341 aa)). Arginine 561, arginine 617, glutamate 745, glycine 766, threonine 767, asparagine 768, and aspartate 769 together coordinate substrate. Residue glutamate 745 coordinates Mg(2+). Aspartate 769 contacts Mg(2+). The Proton donor role is filled by cysteine 831.

Belongs to the PEP-utilizing enzyme family. Homodimer. Mg(2+) is required as a cofactor. Post-translationally, phosphorylation of Thr-453 in the dark inactivates the enzyme. Dephosphorylation upon light stimulation reactivates the enzyme.

The enzyme catalyses pyruvate + phosphate + ATP = phosphoenolpyruvate + AMP + diphosphate + H(+). Activated by light-induced dephosphorylation. Inhibited by dark-induced phosphorylation. Both reactions are catalyzed by PDRP1. Functionally, catalyzes the reversible phosphorylation of pyruvate and phosphate. In E.histolytica and C.symbiosus, PPDK functions in the direction of ATP synthesis. This is Pyruvate, phosphate dikinase (ppdK) from Clostridium symbiosum (Bacteroides symbiosus).